We begin with the raw amino-acid sequence, 485 residues long: ATP-dependent rRNA helicase RRP3 (485 aa).

Basic residues predominate over residues 1–10; sequence MPVLKKRKLA. Residues 1–55 form a disordered region; that stretch reads MPVLKKRKLAHTAQPDPIVSDLESSSSEASQQSHDEQLTAANEQDDESPQVQREE. The segment covering 20–32 has biased composition (low complexity); sequence SDLESSSSEASQQ. Positions 59-87 match the Q motif motif; sequence KSFKDLGIIDSLCEACEALGYKSPTPIQA. The region spanning 90 to 261 is the Helicase ATP-binding domain; the sequence is IPLALQGRDL…RASLSNPLRV (172 aa). 103–110 is an ATP binding site; sequence AETGSGKT. The short motif at 209–212 is the DEAD box element; the sequence is DEAD. The Helicase C-terminal domain maps to 285–433; the sequence is YKDIYLVYLL…EYKVEKEEVM (149 aa). Positions 449–458 are enriched in basic and acidic residues; the sequence is EMKDLHEKRG. Positions 449–485 are disordered; the sequence is EMKDLHEKRGSRGATLKGRRPAKGAKRGRDEMDREEG. Basic residues predominate over residues 465–474; sequence KGRRPAKGAK. Basic and acidic residues predominate over residues 475–485; sequence RGRDEMDREEG.

This sequence belongs to the DEAD box helicase family. DDX47/RRP3 subfamily. In terms of assembly, interacts with the SSU processome.

The protein localises to the nucleus. The catalysed reaction is ATP + H2O = ADP + phosphate + H(+). In terms of biological role, ATP-dependent rRNA helicase required for pre-ribosomal RNA processing. Involved in the maturation of the 35S-pre-rRNA and to its cleavage to mature 18S rRNA. The polypeptide is ATP-dependent rRNA helicase RRP3 (Ajellomyces capsulatus (strain NAm1 / WU24) (Darling's disease fungus)).